A 908-amino-acid chain; its full sequence is UPF0182 protein NT01CX_0852 (908 aa).

7 helical membrane passes run 8-28, 47-67, 96-116, 157-177, 209-229, 253-273, and 280-300; these read IGLF…VNVI, FTSV…AIKT, IINA…SLGY, LLSL…FLNI, LAIL…IKAW, FYIA…FSIL, and IISC…VSGA.

This sequence belongs to the UPF0182 family.

It is found in the cell membrane. This Clostridium novyi (strain NT) protein is UPF0182 protein NT01CX_0852.